We begin with the raw amino-acid sequence, 152 residues long: Ribonuclease H (152 aa).

Residues 4 to 145 (SRSMVEIFSD…CDELARQAIA (142 aa)) form the RNase H type-1 domain. Asp13, Glu51, Asp73, and Asp137 together coordinate Mg(2+).

The protein belongs to the RNase H family. In terms of assembly, monomer. The cofactor is Mg(2+).

The protein localises to the cytoplasm. It catalyses the reaction Endonucleolytic cleavage to 5'-phosphomonoester.. Its function is as follows. Endonuclease that specifically degrades the RNA of RNA-DNA hybrids. The sequence is that of Ribonuclease H from Syntrophotalea carbinolica (strain DSM 2380 / NBRC 103641 / GraBd1) (Pelobacter carbinolicus).